A 281-amino-acid polypeptide reads, in one-letter code: Pantothenate synthetase (281 aa).

Position 30-37 (30-37 (MGNLHLGH)) interacts with ATP. H37 serves as the catalytic Proton donor. A (R)-pantoate-binding site is contributed by Q61. Position 61 (Q61) interacts with beta-alanine. Residue 149–152 (GRKD) participates in ATP binding. A (R)-pantoate-binding site is contributed by Q155. ATP-binding positions include I178 and 186–189 (MSSR).

This sequence belongs to the pantothenate synthetase family. As to quaternary structure, homodimer.

It is found in the cytoplasm. The catalysed reaction is (R)-pantoate + beta-alanine + ATP = (R)-pantothenate + AMP + diphosphate + H(+). It participates in cofactor biosynthesis; (R)-pantothenate biosynthesis; (R)-pantothenate from (R)-pantoate and beta-alanine: step 1/1. Functionally, catalyzes the condensation of pantoate with beta-alanine in an ATP-dependent reaction via a pantoyl-adenylate intermediate. The polypeptide is Pantothenate synthetase (Shewanella sediminis (strain HAW-EB3)).